The chain runs to 192 residues: UPF0301 protein BceJ2315_30870 (192 aa).

It belongs to the UPF0301 (AlgH) family.

The polypeptide is UPF0301 protein BceJ2315_30870 (Burkholderia cenocepacia (strain ATCC BAA-245 / DSM 16553 / LMG 16656 / NCTC 13227 / J2315 / CF5610) (Burkholderia cepacia (strain J2315))).